A 510-amino-acid chain; its full sequence is 2,3-bisphosphoglycerate-independent phosphoglycerate mutase (510 aa).

Positions 12 and 62 each coordinate Mn(2+). Serine 62 serves as the catalytic Phosphoserine intermediate. Substrate contacts are provided by residues histidine 121, 151–152 (RD), arginine 183, arginine 189, 258–261 (RPDR), and lysine 331. Mn(2+) is bound by residues aspartate 398, histidine 402, aspartate 439, histidine 440, and histidine 458.

Belongs to the BPG-independent phosphoglycerate mutase family. As to quaternary structure, monomer. It depends on Mn(2+) as a cofactor.

The catalysed reaction is (2R)-2-phosphoglycerate = (2R)-3-phosphoglycerate. Its pathway is carbohydrate degradation; glycolysis; pyruvate from D-glyceraldehyde 3-phosphate: step 3/5. In terms of biological role, catalyzes the interconversion of 2-phosphoglycerate and 3-phosphoglycerate. The protein is 2,3-bisphosphoglycerate-independent phosphoglycerate mutase of Clostridioides difficile (strain 630) (Peptoclostridium difficile).